Consider the following 294-residue polypeptide: Melanocortin receptor 5 (294 aa).

The Extracellular segment spans residues 1–29; sequence FLDLQLNATEGNVSGPSVGNTSSPCEDMG. N-linked (GlcNAc...) asparagine glycosylation is found at N7, N12, and N20. A helical membrane pass occupies residues 30–53; the sequence is IEVEVFLTLGLISLLENILVIGAI. Over 54–65 the chain is Cytoplasmic; sequence ARNKNLHVPMYF. The chain crosses the membrane as a helical span at residues 66-89; sequence FVCSLAVADMLVSLSNSWETITIY. Residues 90–106 are Extracellular-facing; sequence LIANKHLVLSDTSVRHL. Residues 107–130 traverse the membrane as a helical segment; sequence DNVFDSMICISLVASMCSLLAVAV. Topologically, residues 131 to 147 are cytoplasmic; that stretch reads DRYVTIFYALRYQHLMT. The helical transmembrane segment at 148–171 threads the bilayer; the sequence is GRRCGAIIAGIWALCTGCGPVFIV. At 172–178 the chain is on the extracellular side; sequence YYESTYV. A helical transmembrane segment spans residues 179-203; it reads VVCLVAMFLTMLLLMASLYAHMFLQ. Residues 204 to 231 are Cytoplasmic-facing; the sequence is ARAHVRRIAALPGYRSARQRTSMKGAVT. Residues 232-257 form a helical membrane-spanning segment; that stretch reads LAMLLGVFIVCWAPFFLHLILMISCP. Residues 258–265 are Extracellular-facing; sequence QNLYCSCF. The helical transmembrane segment at 266–289 threads the bilayer; the sequence is MSHFNMYLILIMCNSVIDPLIYAF. Topologically, residues 290–294 are cytoplasmic; the sequence is RSQEK.

The protein belongs to the G-protein coupled receptor 1 family.

Its subcellular location is the cell membrane. Receptor for MSH (alpha, beta and gamma) and ACTH. The activity of this receptor is mediated by G proteins which activate adenylate cyclase. This receptor is a possible mediator of the immunomodulation properties of melanocortins. This Sus scrofa (Pig) protein is Melanocortin receptor 5 (MC5R).